The primary structure comprises 842 residues: Taste receptor type 1 member 1 (842 aa).

The N-terminal stretch at 1-19 (MLFWAAHLLLSLQLAVAYC) is a signal peptide. Topologically, residues 20 to 568 (WAFSCQRTES…EFLGWHEPIS (549 aa)) are extracellular. Asn-88, Asn-89, Asn-96, Asn-136, Asn-292, Asn-480, and Asn-530 each carry an N-linked (GlcNAc...) asparagine glycan. A helical membrane pass occupies residues 569-589 (LVLLAANTLLLLLLIGTAGLF). The Cytoplasmic portion of the chain corresponds to 590 to 604 (AWRLHTPVVRSAGGR). A helical membrane pass occupies residues 605–625 (LCFLMLGSLVAGSCSLYSFFG). Residues 626–640 (KPTVPACLLRQPLFS) are Extracellular-facing. Residues 641 to 661 (LGFAIFLSCLTIRSFQLVIIF) form a helical membrane-spanning segment. Topologically, residues 662-681 (KFSTKVPTFYHTWAQNHGAG) are cytoplasmic. Residues 682–702 (IFVIVSSTVHLFLCLTWLAMW) form a helical membrane-spanning segment. Topologically, residues 703–725 (TPRPTREYQRFPHLVILECTEVN) are extracellular. Residues 726-746 (SVGFLVAFAHNILLSISTFVC) traverse the membrane as a helical segment. The Cytoplasmic portion of the chain corresponds to 747 to 762 (SYLGKELPENYNEAKC). A helical transmembrane segment spans residues 763–783 (VTFSLLLHFVSWIAFFTMSSI). At 784–789 (YQGSYL) the chain is on the extracellular side. The helical transmembrane segment at 790–810 (PAVNVLAGLATLSGGFSGYFL) threads the bilayer. Residues 811-842 (PKCYVILCRPELNNTEHFQASIQDYTRRCGTT) are Cytoplasmic-facing.

Belongs to the G-protein coupled receptor 3 family. TAS1R subfamily. Forms heterodimers with TAS1R3. In terms of tissue distribution, expressed strongly only in fungiform papillae.

It is found in the cell membrane. Its function is as follows. Putative taste receptor. TAS1R1/TAS1R3 responds to the umami taste stimulus (the taste of monosodium glutamate) and also to most of the 20 standard L-amino acids, but not to their D-enantiomers or other compounds. Sequence differences within and between species can significantly influence the selectivity and specificity of taste responses. The polypeptide is Taste receptor type 1 member 1 (Tas1r1) (Mus musculus (Mouse)).